Here is a 162-residue protein sequence, read N- to C-terminus: Large ribosomal subunit protein uL10 (162 aa).

It belongs to the universal ribosomal protein uL10 family. In terms of assembly, part of the ribosomal stalk of the 50S ribosomal subunit. The N-terminus interacts with L11 and the large rRNA to form the base of the stalk. The C-terminus forms an elongated spine to which L12 dimers bind in a sequential fashion forming a multimeric L10(L12)X complex.

Functionally, forms part of the ribosomal stalk, playing a central role in the interaction of the ribosome with GTP-bound translation factors. The chain is Large ribosomal subunit protein uL10 from Borrelia recurrentis (strain A1).